Reading from the N-terminus, the 367-residue chain is Cytochrome b (367 aa).

The next 4 helical transmembrane spans lie at Phe-33–Met-53, Trp-77–Ile-98, Trp-113–Leu-133, and Phe-178–Leu-198. 2 residues coordinate heme b: His-83 and His-97. Heme b-binding residues include His-182 and His-196. His-201 provides a ligand contact to a ubiquinone. 4 consecutive transmembrane segments (helical) span residues Ile-226–Ser-246, Leu-288–His-308, Phe-320–Gly-340, and Tyr-347–Pro-367.

Belongs to the cytochrome b family. The cytochrome bc1 complex contains 11 subunits: 3 respiratory subunits (MT-CYB, CYC1 and UQCRFS1), 2 core proteins (UQCRC1 and UQCRC2) and 6 low-molecular weight proteins (UQCRH/QCR6, UQCRB/QCR7, UQCRQ/QCR8, UQCR10/QCR9, UQCR11/QCR10 and a cleavage product of UQCRFS1). This cytochrome bc1 complex then forms a dimer. Heme b serves as cofactor.

The protein resides in the mitochondrion inner membrane. Its function is as follows. Component of the ubiquinol-cytochrome c reductase complex (complex III or cytochrome b-c1 complex) that is part of the mitochondrial respiratory chain. The b-c1 complex mediates electron transfer from ubiquinol to cytochrome c. Contributes to the generation of a proton gradient across the mitochondrial membrane that is then used for ATP synthesis. The protein is Cytochrome b (MT-CYB) of Hypsugo savii (Savi's pipistrelle).